The following is a 140-amino-acid chain: L-fucose mutarotase (140 aa).

The active-site Proton donor is H22. Residues D30, R107, and 129–131 each bind substrate; that span reads YGN.

This sequence belongs to the RbsD / FucU family. FucU mutarotase subfamily. As to quaternary structure, homodecamer.

The protein resides in the cytoplasm. It carries out the reaction alpha-L-fucose = beta-L-fucose. Its pathway is carbohydrate metabolism; L-fucose metabolism. Its function is as follows. Involved in the anomeric conversion of L-fucose. This is L-fucose mutarotase from Citrobacter koseri (strain ATCC BAA-895 / CDC 4225-83 / SGSC4696).